The sequence spans 147 residues: DNA-directed RNA polymerase I subunit rpa14 (147 aa).

The segment at 71-147 is disordered; sequence VQGPPTEELI…TQGVGEKEQS (77 aa). Over residues 74–84 the composition is skewed to low complexity; it reads PPTEELIIPPE. Over residues 87-111 the composition is skewed to basic and acidic residues; sequence LETKEEESLKHAREENDDLHLDKET. Basic residues predominate over residues 112–124; the sequence is KKRLKKEKKKAAR. Basic and acidic residues predominate over residues 125–135; the sequence is REKEEARKAKA.

As to quaternary structure, component of the RNA polymerase I (Pol I) complex consisting of 14 subunits. Part of a Pol I subcomplex consisting of the subunits A14 and A43. Interacts with rpa43. In terms of processing, phosphorylated.

The protein resides in the nucleus. The protein localises to the nucleolus. Its function is as follows. DNA-dependent RNA polymerase catalyzes the transcription of DNA into RNA using the four ribonucleoside triphosphates as substrates. Component of RNA polymerase I which synthesizes ribosomal RNA precursors. A14 seems to play a role in the stability of Pol I subunit A43 and association of rrn3 to Pol I. The polypeptide is DNA-directed RNA polymerase I subunit rpa14 (ker1) (Schizosaccharomyces pombe (strain 972 / ATCC 24843) (Fission yeast)).